The chain runs to 454 residues: L-serine dehydratase 1 (454 aa).

It belongs to the iron-sulfur dependent L-serine dehydratase family. [4Fe-4S] cluster serves as cofactor. Post-translationally, activated by post-translational modification by a system involving at least three gene products. Activation is mimicked in vitro by iron and dithiothreitol. There is considerable evidence for a free-radical activation mechanism.

The catalysed reaction is L-serine = pyruvate + NH4(+). It participates in carbohydrate biosynthesis; gluconeogenesis. Also deaminates threonine, particularly when it is present in high concentration. The sequence is that of L-serine dehydratase 1 (sdaA) from Escherichia coli (strain K12).